Here is a 249-residue protein sequence, read N- to C-terminus: Ditrans,polycis-undecaprenyl-diphosphate synthase ((2E,6E)-farnesyl-diphosphate specific) (249 aa).

D18 is an active-site residue. D18 is a Mg(2+) binding site. Substrate contacts are provided by residues 19–22 (GNNR), F23, K31, H35, and 63–65 (SSE). N66 serves as the catalytic Proton acceptor. Residues W67, R69, R186, and 192–194 (RLS) contribute to the substrate site. E205 provides a ligand contact to Mg(2+).

Belongs to the UPP synthase family. As to quaternary structure, homodimer. Mg(2+) serves as cofactor.

The enzyme catalyses 8 isopentenyl diphosphate + (2E,6E)-farnesyl diphosphate = di-trans,octa-cis-undecaprenyl diphosphate + 8 diphosphate. Catalyzes the sequential condensation of isopentenyl diphosphate (IPP) with (2E,6E)-farnesyl diphosphate (E,E-FPP) to yield (2Z,6Z,10Z,14Z,18Z,22Z,26Z,30Z,34E,38E)-undecaprenyl diphosphate (di-trans,octa-cis-UPP). UPP is the precursor of glycosyl carrier lipid in the biosynthesis of bacterial cell wall polysaccharide components such as peptidoglycan and lipopolysaccharide. This Acinetobacter baylyi (strain ATCC 33305 / BD413 / ADP1) protein is Ditrans,polycis-undecaprenyl-diphosphate synthase ((2E,6E)-farnesyl-diphosphate specific).